The following is an 859-amino-acid chain: MTAIDPQSLEKHTPMMRQYLTLKAQHPDMLLFYRMGDFYELFYEDAKKASELLGISLTARGKSGGDPIPMAGLPYHAVEGYLAKLVQLRVSVAICEQVGDPATSKGPVERKVVRIVTPGTLTDEALLQERQDNLLAALYQGKTGYGYATLDVASGRFVVTELANTEALEAELQRTNPAELLYSEDFSQMSLIAGMNGTRRRPEWEFDYDTCQRMLLNQFGTKDLKGFGIEDARLSLQAAGCLMQYVKDTQRTALPHINSIVRFNQSDSIVLDAATRRNLELTVNLQGGRENTLASVLDNTVTPMGSRMLQRWIHQPLRDHDIIRARQASIAELMMTGDFETLSEDLKALGDVERITARIALRNARPRDFARLRQALTLLPQLQQTLSAASAPHLKYLSQVIGVFPEEVDLLSRAVVDNPPMLIRDGGVIREGYNEELDQWRKLSEGATDYLHELEAREKEQTGISTLKVGYNRVHGYYIEVSRRESDLVPLSYQRRQTLKNTERYIIPELKEHEEKVLSSQGRALALEKQLWEQLFDLILPKLHELQDFAQASAELDVLCNFAERAESLNYHCPELSSISGIHIEAGRHPVVEQVSQSPFIANPVTLNAQRKMLIVTGPNMGGKSTYMRQVALITLMAHIGCYVPAEQAVIGPVDRIFTRIGASDDLASGRSTFMVEMTETANILHNATPNSLVLMDEIGRGTSTYDGLSLAWSAAEYLAKQLQAMTLFATHYFELTQLPEQLSNVENVHLDAVEHGDSIVFMHAVQEGAASRSYGLQVAALAGVPNCVISAAKHKLHQLESRDHDVQQNTEQQGTQQNMSFVPSAPSPAVEALQKLNPDELTPRQALDYLYNLKKLAL.

Residue 618 to 625 coordinates ATP; that stretch reads GPNMGGKS. The disordered stretch occupies residues 803 to 829; sequence RDHDVQQNTEQQGTQQNMSFVPSAPSP. Residues 808-819 show a composition bias toward low complexity; it reads QQNTEQQGTQQN.

This sequence belongs to the DNA mismatch repair MutS family.

This protein is involved in the repair of mismatches in DNA. It is possible that it carries out the mismatch recognition step. This protein has a weak ATPase activity. The sequence is that of DNA mismatch repair protein MutS from Shewanella pealeana (strain ATCC 700345 / ANG-SQ1).